The sequence spans 520 residues: Cytochrome P450 monooxygenase vrtE (520 aa).

The chain crosses the membrane as a helical span at residues 16–36 (ALSLLHYVLGAIFLLLLFHML). The N-linked (GlcNAc...) asparagine glycan is linked to Asn137. Cys459 contributes to the heme binding site.

This sequence belongs to the cytochrome P450 family. Heme is required as a cofactor.

The protein resides in the membrane. Its pathway is secondary metabolite biosynthesis; terpenoid biosynthesis. Its function is as follows. Cytochrome P450 monooxygenase; part of the gene cluster that mediates the biosynthesis of viridicatumtoxin, a tetracycline-like fungal meroterpenoid with a unique, fused spirobicyclic ring system. The first step of the pathway is the production of the malonamoyl-CoA starter unit for the polyketide synthase vrtA. The aldolase vrtJ may be involved in the synthesis of the malonamate substrate for malonamoyl-CoA synthetase vrtB. The polyketide synthase vrtA then may utilize the malonamoyl-CoA starter unit, followed by sequential condensation of eight malonyl-CoA units to form the polyketide backbone. The cyclization of the last ring could be mediated by the lactamase-like protein vrtG. The proposed post-PKS tailoring steps are a hydroxylation at C5 catalyzed the cytochrome P450 monooxygenase vrtE, a hydroxylation at C12a catalyzed by VrtH and/or VrtI, and an O-methylation by the O-methyltransferase vrtF. VrtC is then proposed to catalyze the transfer of a geranyl group synthesized by vrtD to the aromatic C ring of the tetracyclic polyketide intermediate of viridicatumtoxin to yield previridicatumtoxin. Finally, the cytochrome P450 monooxygenase vrtK catalyzes the spirocyclization of the geranyl moiety of previridicatumtoxin to afford viridicatumtoxin. This is Cytochrome P450 monooxygenase vrtE from Penicillium aethiopicum.